The chain runs to 380 residues: tRNA-specific 2-thiouridylase MnmA (380 aa).

ATP is bound by residues 26–33 (AMSGGVDS) and Leu52. Residue Cys120 is the Nucleophile of the active site. A disulfide bond links Cys120 and Cys217. Gly144 contributes to the ATP binding site. Positions 166–168 (RDQ) are interaction with tRNA. Cys217 serves as the catalytic Cysteine persulfide intermediate.

This sequence belongs to the MnmA/TRMU family.

Its subcellular location is the cytoplasm. The enzyme catalyses S-sulfanyl-L-cysteinyl-[protein] + uridine(34) in tRNA + AH2 + ATP = 2-thiouridine(34) in tRNA + L-cysteinyl-[protein] + A + AMP + diphosphate + H(+). Its function is as follows. Catalyzes the 2-thiolation of uridine at the wobble position (U34) of tRNA, leading to the formation of s(2)U34. This Jannaschia sp. (strain CCS1) protein is tRNA-specific 2-thiouridylase MnmA.